We begin with the raw amino-acid sequence, 437 residues long: GTPase Era, mitochondrial (437 aa).

A mitochondrion-targeting transit peptide spans 1 to 20 (MAAPRRYCAGLVRALLGARQ). The region spanning 112 to 330 (RVLRVVLLGA…QYLLTQAQPG (219 aa)) is the Era-type G domain. Positions 120 to 127 (GAPNAGKS) are G1. 120 to 127 (GAPNAGKS) is a GTP binding site. Residues 146-150 (HTTRC) are G2. Positions 167–170 (DTPG) are G3. 167–171 (DTPGI) contributes to the GTP binding site. Position 173 is a phosphoserine (Ser173). 236–239 (NKVD) is a binding site for GTP. Residues 236–239 (NKVD) are G4. The segment at 270-292 (LRSRSSTHCPGPETEGPNAHSVR) is disordered. The G5 stretch occupies residues 308–310 (LSA). Residues 360–437 (LPEEVPYGVQ…LIRLSVKLLK (78 aa)) enclose the KH type-2 domain.

The protein belongs to the TRAFAC class TrmE-Era-EngA-EngB-Septin-like GTPase superfamily. Era GTPase family.

The protein localises to the mitochondrion matrix. It localises to the mitochondrion inner membrane. Probable GTPase that plays a role in the mitochondrial ribosomal small subunit assembly. Specifically binds the 12S mitochondrial rRNA (12S mt-rRNA) to a 33 nucleotide section delineating the 3' terminal stem-loop region. May act as a chaperone that protects the 12S mt-rRNA on the 28S mitoribosomal subunit during ribosomal small subunit assembly. The polypeptide is GTPase Era, mitochondrial (Eral1) (Mus musculus (Mouse)).